Consider the following 197-residue polypeptide: Prefoldin subunit 3 (197 aa).

Ala-2 is modified (N-acetylalanine). Lys-59 carries the N6-acetyllysine modification.

This sequence belongs to the prefoldin subunit alpha family. Heterohexamer of two PFD-alpha type and four PFD-beta type subunits. Binds to the C-terminal part of VHL.

Its subcellular location is the cytoplasm. The protein localises to the nucleus. Functionally, binds specifically to cytosolic chaperonin (c-CPN) and transfers target proteins to it. Binds to nascent polypeptide chain and promotes folding in an environment in which there are many competing pathways for nonnative proteins. The sequence is that of Prefoldin subunit 3 (VBP1) from Bos taurus (Bovine).